Here is a 329-residue protein sequence, read N- to C-terminus: Fructose-1,6-bisphosphatase class 1 (329 aa).

Positions 84, 103, 105, and 106 each coordinate Mg(2+). Residues 106 to 109 (DGSS), asparagine 196, and lysine 262 each bind substrate. Mg(2+) is bound at residue glutamate 268.

This sequence belongs to the FBPase class 1 family. In terms of assembly, homotetramer. The cofactor is Mg(2+).

The protein resides in the cytoplasm. The enzyme catalyses beta-D-fructose 1,6-bisphosphate + H2O = beta-D-fructose 6-phosphate + phosphate. It participates in carbohydrate biosynthesis; gluconeogenesis. In Shewanella halifaxensis (strain HAW-EB4), this protein is Fructose-1,6-bisphosphatase class 1.